The primary structure comprises 45 residues: Large ribosomal subunit protein bL34 (45 aa).

Positions 1 to 45 (MTKRTFGGTSRKRKRVSGFRVRMRSHTGRRVVRTRRKRGRSRLTV) are disordered. Positions 10 to 45 (SRKRKRVSGFRVRMRSHTGRRVVRTRRKRGRSRLTV) are enriched in basic residues.

It belongs to the bacterial ribosomal protein bL34 family.

This Prochlorococcus marinus (strain NATL2A) protein is Large ribosomal subunit protein bL34.